Consider the following 29-residue polypeptide: Trypsin inhibitor 3 (29 aa).

3 disulfides stabilise this stretch: cysteine 3–cysteine 20, cysteine 10–cysteine 22, and cysteine 16–cysteine 28.

This sequence belongs to the protease inhibitor I7 (squash-type serine protease inhibitor) family.

It is found in the secreted. Functionally, strongly inhibits trypsin, weakly inhibits chymotrypsin. In Cyclanthera pedata (Achocha), this protein is Trypsin inhibitor 3.